Reading from the N-terminus, the 376-residue chain is Putative glutamate--cysteine ligase 2 (376 aa).

This sequence belongs to the glutamate--cysteine ligase type 2 family. YbdK subfamily.

It carries out the reaction L-cysteine + L-glutamate + ATP = gamma-L-glutamyl-L-cysteine + ADP + phosphate + H(+). Its function is as follows. ATP-dependent carboxylate-amine ligase which exhibits weak glutamate--cysteine ligase activity. In Paracoccus denitrificans (strain Pd 1222), this protein is Putative glutamate--cysteine ligase 2.